A 210-amino-acid chain; its full sequence is MNKVLVSLLLTLGITGMAHAAGDAEAGQGKVAVCGACHGVDGNSPAPNFPKLAGQGERYLLKQLQDIKAGSTPGAPEGVGRKVLEMTGMLDPLSDQDLEDIAAYFSSQKGSVGYADPALAKQGEKLFRGGKLDQGMPACTGCHAPNGVGNDLAGFPKLGGQHAAYTAKQLTDFREGNRTNDGDTMIMRGVAAKLSNKDIEALSSYIQGLH.

The signal sequence occupies residues 1–20 (MNKVLVSLLLTLGITGMAHA). Cys34, Cys37, His38, Met86, Cys139, Cys142, His143, and Met187 together coordinate heme c.

In terms of processing, binds 2 heme c groups covalently per subunit.

It is found in the periplasm. In terms of biological role, diheme, high potential cytochrome c believed to be an intermediate electron donor to terminal oxidation systems. The chain is Cytochrome c4 (cc4) from Stutzerimonas stutzeri (Pseudomonas stutzeri).